The following is a 179-amino-acid chain: Ribosome maturation factor RimM (179 aa).

In terms of domain architecture, PRC barrel spans 96 to 175; that stretch reads KDEYFWFDIE…IITVIGAMDI (80 aa).

Belongs to the RimM family. As to quaternary structure, binds ribosomal protein uS19.

Its subcellular location is the cytoplasm. Functionally, an accessory protein needed during the final step in the assembly of 30S ribosomal subunit, possibly for assembly of the head region. Essential for efficient processing of 16S rRNA. May be needed both before and after RbfA during the maturation of 16S rRNA. It has affinity for free ribosomal 30S subunits but not for 70S ribosomes. The polypeptide is Ribosome maturation factor RimM (Sulfurimonas denitrificans (strain ATCC 33889 / DSM 1251) (Thiomicrospira denitrificans (strain ATCC 33889 / DSM 1251))).